An 88-amino-acid polypeptide reads, in one-letter code: EKC/KEOPS complex subunit SPAC4H3.13 (88 aa).

It belongs to the CTAG/PCC1 family. In terms of assembly, component of the EKC/KEOPS complex composed of at least of SPAP27G11.07c/BUD32, cgi121, gon7, pgp2 and SPAC4H3.13/PCC1; the whole complex dimerizes.

It localises to the cytoplasm. Its subcellular location is the nucleus. The protein localises to the chromosome. It is found in the telomere. Component of the EKC/KEOPS complex that is required for the formation of a threonylcarbamoyl group on adenosine at position 37 (t(6)A37) in tRNAs that read codons beginning with adenine. The complex is probably involved in the transfer of the threonylcarbamoyl moiety of threonylcarbamoyl-AMP (TC-AMP) to the N6 group of A37. SPAC4H3.13/PCC1 functions as a dimerization module for the complex. The EKC/KEOPS complex also promotes both telomere uncapping and telomere elongation. The complex is required for efficient recruitment of transcriptional coactivators. The chain is EKC/KEOPS complex subunit SPAC4H3.13 from Schizosaccharomyces pombe (strain 972 / ATCC 24843) (Fission yeast).